We begin with the raw amino-acid sequence, 247 residues long: ATP synthase subunit a, chloroplastic (247 aa).

Helical transmembrane passes span 38-58, 95-115, 134-154, 199-219, and 220-240; these read QVLI…IIAV, VPFI…GALL, INTT…AGLS, LVVV…VMFL, and GLFT…AYIG.

This sequence belongs to the ATPase A chain family. In terms of assembly, F-type ATPases have 2 components, CF(1) - the catalytic core - and CF(0) - the membrane proton channel. CF(1) has five subunits: alpha(3), beta(3), gamma(1), delta(1), epsilon(1). CF(0) has four main subunits: a, b, b' and c.

It is found in the plastid. Its subcellular location is the chloroplast thylakoid membrane. In terms of biological role, key component of the proton channel; it plays a direct role in the translocation of protons across the membrane. The protein is ATP synthase subunit a, chloroplastic of Sorghum bicolor (Sorghum).